Here is a 972-residue protein sequence, read N- to C-terminus: POM121-like protein 2 (972 aa).

Disordered stretches follow at residues 1 to 67 (MGSY…PANP), 281 to 302 (LKKAGESPNSHLSVTPSSSGQL), 328 to 359 (TEEDPTLEGQAVPSNQTTEATTGTAGDSIPEM), 406 to 431 (GISSDSNPSIASTQASPSSPTTPVTD), 676 to 726 (LGLS…AIDG), and 953 to 972 (SKTLRNREPGRSRKHHTYKK). The segment covering 40–57 (RVQHVHRAQPARRHRPAR) has biased composition (basic residues). 2 stretches are compositionally biased toward polar residues: residues 287 to 302 (SPNSHLSVTPSSSGQL) and 339 to 352 (VPSNQTTEATTGTA). The segment covering 413-431 (PSIASTQASPSSPTTPVTD) has biased composition (low complexity). Polar residues predominate over residues 677-696 (GLSSTNQPPVTSSNSNVTSA). The segment covering 697–706 (LTSSLGSSPK) has biased composition (low complexity).

Belongs to the POM121 family.

This chain is POM121-like protein 2 (Pom121l2), found in Mus musculus (Mouse).